The sequence spans 379 residues: Glutamate 5-kinase (379 aa).

Lys-20 lines the ATP pocket. Ser-59, Asp-146, and Asn-158 together coordinate substrate. Position 220–226 (220–226) interacts with ATP; the sequence is SGGMYSK. In terms of domain architecture, PUA spans 285 to 362; it reads TGSVVVDDGA…AELTAILGDN (78 aa).

Belongs to the glutamate 5-kinase family.

Its subcellular location is the cytoplasm. The catalysed reaction is L-glutamate + ATP = L-glutamyl 5-phosphate + ADP. The protein operates within amino-acid biosynthesis; L-proline biosynthesis; L-glutamate 5-semialdehyde from L-glutamate: step 1/2. Catalyzes the transfer of a phosphate group to glutamate to form L-glutamate 5-phosphate. The polypeptide is Glutamate 5-kinase (Oleidesulfovibrio alaskensis (strain ATCC BAA-1058 / DSM 17464 / G20) (Desulfovibrio alaskensis)).